A 209-amino-acid chain; its full sequence is Large ribosomal subunit protein eL13 (209 aa).

Belongs to the eukaryotic ribosomal protein eL13 family. In terms of assembly, component of the 60S large ribosomal subunit (LSU).

Its subcellular location is the cytoplasm. Functionally, component of the ribosome, a large ribonucleoprotein complex responsible for the synthesis of proteins in the cell. The small ribosomal subunit (SSU) binds messenger RNAs (mRNAs) and translates the encoded message by selecting cognate aminoacyl-transfer RNA (tRNA) molecules. The large subunit (LSU) contains the ribosomal catalytic site termed the peptidyl transferase center (PTC), which catalyzes the formation of peptide bonds, thereby polymerizing the amino acids delivered by tRNAs into a polypeptide chain. The nascent polypeptides leave the ribosome through a tunnel in the LSU and interact with protein factors that function in enzymatic processing, targeting, and the membrane insertion of nascent chains at the exit of the ribosomal tunnel. As part of the LSU, it is probably required for its formation and the maturation of rRNAs. This Dictyostelium discoideum (Social amoeba) protein is Large ribosomal subunit protein eL13 (rpl13).